Reading from the N-terminus, the 268-residue chain is Homeobox protein Hox-D12 (268 aa).

The segment at 102-124 (TPDAPTASEERSRTRPPFAPESS) is disordered. A DNA-binding region (homeobox) is located at residues 200–259 (ARKKRKPYTKQQIAELENEFLVNEFINRQKRKELSNRLNLSDQQVKIWFQNRRMKKKRVV).

This sequence belongs to the Abd-B homeobox family.

It is found in the nucleus. Functionally, sequence-specific transcription factor which is part of a developmental regulatory system that provides cells with specific positional identities on the anterior-posterior axis. The protein is Homeobox protein Hox-D12 (Hoxd12) of Mus musculus (Mouse).